The chain runs to 515 residues: 2-isopropylmalate synthase (515 aa).

One can recognise a Pyruvate carboxyltransferase domain in the interval 4-266; sequence IKFFDTTLRD…ETRLNLQEIK (263 aa). Aspartate 13, histidine 201, histidine 203, and asparagine 237 together coordinate Mn(2+). The tract at residues 391–515 is regulatory domain; the sequence is QLSSIQVQYG…RGENEKVATP (125 aa).

The protein belongs to the alpha-IPM synthase/homocitrate synthase family. LeuA type 1 subfamily. As to quaternary structure, homodimer. Mn(2+) serves as cofactor.

It is found in the cytoplasm. The enzyme catalyses 3-methyl-2-oxobutanoate + acetyl-CoA + H2O = (2S)-2-isopropylmalate + CoA + H(+). It functions in the pathway amino-acid biosynthesis; L-leucine biosynthesis; L-leucine from 3-methyl-2-oxobutanoate: step 1/4. In terms of biological role, catalyzes the condensation of the acetyl group of acetyl-CoA with 3-methyl-2-oxobutanoate (2-ketoisovalerate) to form 3-carboxy-3-hydroxy-4-methylpentanoate (2-isopropylmalate). In Geobacillus kaustophilus (strain HTA426), this protein is 2-isopropylmalate synthase.